We begin with the raw amino-acid sequence, 176 residues long: Small ribosomal subunit protein uS5 (176 aa).

The region spanning 11-74 (LSEVLVDVNR…QAAKKRMMKV (64 aa)) is the S5 DRBM domain.

This sequence belongs to the universal ribosomal protein uS5 family. Part of the 30S ribosomal subunit. Contacts proteins S4 and S8.

In terms of biological role, with S4 and S12 plays an important role in translational accuracy. Its function is as follows. Located at the back of the 30S subunit body where it stabilizes the conformation of the head with respect to the body. This Rickettsia conorii (strain ATCC VR-613 / Malish 7) protein is Small ribosomal subunit protein uS5.